Reading from the N-terminus, the 135-residue chain is ATP synthase epsilon chain (135 aa).

The protein belongs to the ATPase epsilon chain family. In terms of assembly, F-type ATPases have 2 components, CF(1) - the catalytic core - and CF(0) - the membrane proton channel. CF(1) has five subunits: alpha(3), beta(3), gamma(1), delta(1), epsilon(1). CF(0) has three main subunits: a, b and c.

The protein resides in the cell inner membrane. Its function is as follows. Produces ATP from ADP in the presence of a proton gradient across the membrane. This is ATP synthase epsilon chain from Nitrobacter winogradskyi (strain ATCC 25391 / DSM 10237 / CIP 104748 / NCIMB 11846 / Nb-255).